The primary structure comprises 344 residues: Lipase chaperone (344 aa).

The helical transmembrane segment at 14 to 34 (AVVYGVVGLAAIAGVAMWSGA) threads the bilayer.

Belongs to the lipase chaperone family.

It localises to the cell inner membrane. Functionally, may be involved in the folding of the extracellular lipase during its passage through the periplasm. The sequence is that of Lipase chaperone (lifO) from Burkholderia cepacia (Pseudomonas cepacia).